The primary structure comprises 292 residues: Geranyl diphosphate 2-C-methyltransferase (292 aa).

Belongs to the geranyl diphosphate 2-C-methyltransferase family. Mg(2+) is required as a cofactor.

It carries out the reaction (2E)-geranyl diphosphate + S-adenosyl-L-methionine = (E)-2-methylgeranyl diphosphate + S-adenosyl-L-homocysteine + H(+). Functionally, catalyzes the SAM-dependent methylation of geranyl diphosphate (GPP) to yield (E)-2-methylgeranyl diphosphate (2-MeGPP). This is Geranyl diphosphate 2-C-methyltransferase from Streptomyces coelicolor (strain ATCC BAA-471 / A3(2) / M145).